The chain runs to 128 residues: Large ribosomal subunit protein bL17 (128 aa).

It belongs to the bacterial ribosomal protein bL17 family. Part of the 50S ribosomal subunit. Contacts protein L32.

The sequence is that of Large ribosomal subunit protein bL17 from Ehrlichia ruminantium (strain Gardel).